We begin with the raw amino-acid sequence, 151 residues long: Deoxyuridine 5'-triphosphate nucleotidohydrolase (151 aa).

Residues 70–72 (RSG), Asn-83, 87–89 (LID), and Met-97 each bind substrate.

Belongs to the dUTPase family. It depends on Mg(2+) as a cofactor.

It catalyses the reaction dUTP + H2O = dUMP + diphosphate + H(+). The protein operates within pyrimidine metabolism; dUMP biosynthesis; dUMP from dCTP (dUTP route): step 2/2. In terms of biological role, this enzyme is involved in nucleotide metabolism: it produces dUMP, the immediate precursor of thymidine nucleotides and it decreases the intracellular concentration of dUTP so that uracil cannot be incorporated into DNA. The protein is Deoxyuridine 5'-triphosphate nucleotidohydrolase of Pseudomonas putida (strain W619).